The sequence spans 451 residues: MAKHERGLRFQPAGGVKTVQIPAGKKQRLTIERLSDDGRGIAFLEGKTWFVAGSLAGEEVEARVLNARGKVVEARTERVFTASTMRRAPACEYFGRCGGCSVQHVPHEEQLALKQRMLAEQLLRVANVVPDEWAAPLSGAELAYRRRARVAVRWDAKAKRLDVGFRAAASQDIVSIEHCPVLVQALQPIMNELPGMLKNFSKPQALGHVELFSGVATAVLLRHTAPLAEADLALLQAFCSKHGAQLWLHGEGEPQPVSPGDTLGYRLEPWNLQLAWRPGDFIQVNAAVNTAMIEQALQWLAPAKDERVMDLFCGLGNFALPLAGLAREVVAVEGVATMVERAAVNAMSNDLHNVQFFQADLSQPLTHADWAAEGFSTVLLDPPRDGAFEVVRQIRKTGARRLLYVSCNPATLARDTVELISQGYRLKRAGILDMFPQTAHVEAMALFEMSK.

The TRAM domain maps to 20-78 (QIPAGKKQRLTIERLSDDGRGIAFLEGKTWFVAGSLAGEEVEARVLNARGKVVEARTER). Positions 91, 97, 100, and 179 each coordinate [4Fe-4S] cluster. Gln283, Phe312, Asn317, Glu333, Asp360, and Asp381 together coordinate S-adenosyl-L-methionine. Catalysis depends on Cys407, which acts as the Nucleophile.

The protein belongs to the class I-like SAM-binding methyltransferase superfamily. RNA M5U methyltransferase family. RlmD subfamily.

The enzyme catalyses uridine(1939) in 23S rRNA + S-adenosyl-L-methionine = 5-methyluridine(1939) in 23S rRNA + S-adenosyl-L-homocysteine + H(+). Catalyzes the formation of 5-methyl-uridine at position 1939 (m5U1939) in 23S rRNA. In Pseudomonas savastanoi pv. phaseolicola (strain 1448A / Race 6) (Pseudomonas syringae pv. phaseolicola (strain 1448A / Race 6)), this protein is 23S rRNA (uracil(1939)-C(5))-methyltransferase RlmD.